The chain runs to 507 residues: Archaeal-type glutamate synthase [NADPH] (507 aa).

4Fe-4S ferredoxin-type domains lie at 10 to 39 (FVVE…YDEN) and 41 to 70 (NRVY…VRKN). The [4Fe-4S] cluster site is built by Cys19, Cys22, Cys25, Cys29, Cys50, Cys53, Cys56, and Cys60.

It belongs to the glutamate synthase family. Requires FMN as cofactor.

The catalysed reaction is 2 L-glutamate + NADP(+) = L-glutamine + 2-oxoglutarate + NADPH + H(+). The chain is Archaeal-type glutamate synthase [NADPH] from Thermotoga maritima (strain ATCC 43589 / DSM 3109 / JCM 10099 / NBRC 100826 / MSB8).